A 374-amino-acid chain; its full sequence is Putative glutamate--cysteine ligase 2 (374 aa).

It belongs to the glutamate--cysteine ligase type 2 family. YbdK subfamily.

It catalyses the reaction L-cysteine + L-glutamate + ATP = gamma-L-glutamyl-L-cysteine + ADP + phosphate + H(+). Functionally, ATP-dependent carboxylate-amine ligase which exhibits weak glutamate--cysteine ligase activity. The polypeptide is Putative glutamate--cysteine ligase 2 (Verminephrobacter eiseniae (strain EF01-2)).